Consider the following 1762-residue polypeptide: MEFVYFSNEFPKDDLHDIYRGLHNHSKHRDFPLLARFLNEATAAVKDEVRRLPTELKRLIPPFDNLLSWVENKELREGLLCGAIDGVLLIVAQVASYIGYVESHPEELRNMSEASLAGLGIGLLASTAISLSTEQADLPLAGADAVRLAFRMGVHVFGVSENLEARDLSEKPETWACVVHNVDPAVAQKELDAMQPAGEVPETGKVFISAISRTSVTVSAPPQKLKALLNKCEFFRKARYIELPVYGGLCHAPHIYSAQDTESIVRGASLNARRKGLEPVVPVYSTSSGQPYAAKTATELFECVVSELLRQAICWDKVIAGIVDSAKRTATTEATLHCFGNSIPLNDLDKAFKSDMPELRVSTNNLVPWIFQNEPRDTAPRGPAQSKLAITGISCRFPGGATTTEKFWEILEKGLDVSRKIPADRFDIETHYDPTGKALNKSMTQYMCPIDEPGLFDAPFFNMSPREAQVVDPQMRLALVTAYEALERAGYVGNRTASTKLERIGTYYGQAADDYREVNQGQEVSTYYIPGGCRAFGPGRINYFFKFAGPSYSIDTACSSGLAAIEIACRALWNGDVDTAVTGGMNILTNPDGFAGLNQGHFLSKGHNACKTWDATADGYCRADGIGSLVIKRLEDAEADNDNILGVILGAGTNHSAEAVSITHPHAGHQAYLSRQVLRQAGVDPLDVSYVELHGTGTQAGDFEEMSGIMDVYAPLTKRRSKDQPLHIGAVKSNVGHGESVAGTTALIKVLMMLQKNAIPKHIGIKTEINPKFPKDFKQRNLHIAFEQTAWPQIPGKKRLAAINNFGAAGGNTTMVLEEGPVREKQQADPRQSHVVAVSAKTKASLTGNIERLIAYLEANPATDLADLAYTSTARRYQHTHRVAMATSDVAELTKKLTSSLSKVDSIGPVGKSGPPQVAFSFTGQGASHKSMNLELYRDVPTFREHIHHLDTIAQNQGFPSCIPALDGSFPQDHEHSPVITQLALVCTEMALAKYWASLGVKPDVVIGHSLGEYAAMHVAGVITASDAIFMVGRRAQMLQEKCKIRSHTMMAVRASVAQISESSGGKRHTIACVNGPSDTVLSGTKEQMNEIQVPLEAAGYRCIKLDVAFAFHSEQTDPILDDLEAVLESGVVFQEPKMPYISPLLGKTIFDGKTLNANYVRRATREAVNFLPAMQNAIDIEAVSEETVWVEIGPHPVCAGFIKSIVPSTQLAIPSIRRNEDNWTTMSSSMAALHLTGVALSWNEFHRPFESSLRLLDLPTYAFTEKNYWLQYNGDWCLTKGNTFYSAEKEAARAAEPQPSVGSDLQTSTVQQVIALEVEGNAGVVVMKSDLMQGDLLVAAHGHRMNGCGVVTSSIHADIAYTLGNYLYRKIKPKDKVPAMNMTDLLVTKGLVAQNKTKYPQEFRVTAATPDITSGQIMMSWQNVDDNEPFATATLILGDANDWLSSWESMSHLICSRIDSLERMAAEGKASRFTRNMAYTLFASNLVDYADKYRGMQSVVMSGLEAFADVELTTKESGTWTIAPYFIDSVAHLAGFVMNCSDAMDAAKNYCVTPGWKSMRFAKPLTAGAKYRSYVRMIPTKDDPTVYLGDVYIMQDDEIMGMVGGIQFRSYPRILLNRFFSAPDKAMTEARAGNAATVTPQVTIPKPPSSLKTPAPANPSRRDSGVESKPLPPPQPKQAPPSTDSENSTISKALTLIATEGGLEISDLGDDVSFADLGIDSLLSLVISEKFRSELGVQVSGSLVLDYPRIGDMRRWLEEHY.

The tract at residues 17 to 247 is N-terminal acylcarrier protein transacylase domain (SAT); sequence DIYRGLHNHS…ARYIELPVYG (231 aa). Residues 385–819 enclose the Ketosynthase family 3 (KS3) domain; the sequence is QSKLAITGIS…GGNTTMVLEE (435 aa). Residues Cys558, His694, and His737 each act as for beta-ketoacyl synthase activity in the active site. Residues 920-1240 are malonyl-CoA:ACP transacylase (MAT) domain; sequence FSFTGQGASH…MAALHLTGVA (321 aa). Positions 1308–1622 are product template (PT) domain; it reads TSTVQQVIAL…PRILLNRFFS (315 aa). Residues 1312–1448 form an N-terminal hotdog fold region; that stretch reads QQVIALEVEG…GDANDWLSSW (137 aa). Positions 1312–1618 constitute a PKS/mFAS DH domain; sequence QQVIALEVEG…FRSYPRILLN (307 aa). His1344 acts as the Proton acceptor; for dehydratase activity in catalysis. The tract at residues 1471–1618 is C-terminal hotdog fold; it reads ASRFTRNMAY…FRSYPRILLN (148 aa). The Proton donor; for dehydratase activity role is filled by Asp1529. Positions 1632-1689 are disordered; that stretch reads RAGNAATVTPQVTIPKPPSSLKTPAPANPSRRDSGVESKPLPPPQPKQAPPSTDSENS. Over residues 1671–1680 the composition is skewed to pro residues; the sequence is PLPPPQPKQA. Residues 1685-1762 form the Carrier domain; it reads DSENSTISKA…DMRRWLEEHY (78 aa). Ser1722 carries the post-translational modification O-(pantetheine 4'-phosphoryl)serine.

It carries out the reaction holo-[ACP] + 8 malonyl-CoA + 8 H(+) = atrochrysone carboxyl-[ACP] + 8 CO2 + 8 CoA + 2 H2O. It functions in the pathway secondary metabolite biosynthesis. In terms of biological role, non-reducing polyketide synthase; part of the gene cluster that mediates the biosynthesis of an emodin derivative that may be involved in black Sigatoka disease of banana. The pathway begins with the synthesis of atrochrysone thioester by the polyketide synthase PKS8-1. The atrochrysone carboxyl ACP thioesterase MYCFIDRAFT_190111 then breaks the thioester bond and releases the atrochrysone carboxylic acid from PKS8-1. The decarboxylase MYCFIDRAFT_34057 then catalyzes the concerted decarboxylation-elimination required to convert atochrysone carboxylic acid into emodin anthrone, which is further oxidized to emodin by the anthrone oxygenase MYCFIDRAFT_34418. The functions of the other tailoring enzymes as well as the final product of the cluster have still to be identified. This chain is Non-reducing polyketide synthase PKS8-1 (PKS8-1), found in Pseudocercospora fijiensis (strain CIRAD86) (Black leaf streak disease fungus).